Reading from the N-terminus, the 417-residue chain is Paired box protein Pax-2 (417 aa).

A DNA-binding region (paired) is located at residues 16–142 (GHGGVNQLGG…SSINRIIRTK (127 aa)). The PAI subdomain stretch occupies residues 19–75 (GVNQLGGVFVNGRPLPDVVRQRIVELAHQGVRPCDISRQLRVSHGCVSKILGRYYET). The RED subdomain stretch occupies residues 94–142 (KVVDKIAEYKRQNPTMFAWEIRDRLLAEGICDNDTVPSVSSINRIIRTK). Threonine 226 is subject to Phosphothreonine. A disordered region spans residues 304–325 (KSSLSASTNPELGSNVSGTQTY). Polar residues predominate over residues 305-325 (SSLSASTNPELGSNVSGTQTY).

As to quaternary structure, interacts with ELGN3; the interaction targets PAX2 for destruction. Interacts with TLE4. In terms of tissue distribution, expressed in primitive cells of the kidney, ureter, eye, ear and central nervous system.

It localises to the nucleus. In terms of biological role, transcription factor that may have a role in kidney cell differentiation. Has a critical role in the development of the urogenital tract, the eyes, and the CNS. The chain is Paired box protein Pax-2 (PAX2) from Homo sapiens (Human).